Reading from the N-terminus, the 668-residue chain is DNA-directed RNA polymerase subunit beta' (668 aa).

Zn(2+)-binding residues include Cys-71, Cys-73, Cys-91, and Cys-94. Mg(2+)-binding residues include Asp-505, Asp-507, and Asp-509.

This sequence belongs to the RNA polymerase beta' chain family. RpoC1 subfamily. As to quaternary structure, in plastids the minimal PEP RNA polymerase catalytic core is composed of four subunits: alpha, beta, beta', and beta''. When a (nuclear-encoded) sigma factor is associated with the core the holoenzyme is formed, which can initiate transcription. Mg(2+) serves as cofactor. Zn(2+) is required as a cofactor.

The protein localises to the plastid. It is found in the chloroplast. The catalysed reaction is RNA(n) + a ribonucleoside 5'-triphosphate = RNA(n+1) + diphosphate. Functionally, DNA-dependent RNA polymerase catalyzes the transcription of DNA into RNA using the four ribonucleoside triphosphates as substrates. In Mesostigma viride (Green alga), this protein is DNA-directed RNA polymerase subunit beta'.